The following is a 750-amino-acid chain: MIIRSPEPEVKILVDRDPIKTSFEEWAKPGHFSRTIAKGPDTTTWIWNLHADAHDFDSHTNDLEEISRKVFSAHFGQLSIIFLWLSGMYFHGARFSNYEAWLSDPTHIRPSAQVVWPIVGQEILNGDVGGGFRGIQITSGFFQIWRASGITSELQLYCTAIGALVFAALMLFAGWFHYHKAAPKLAWFQDVESMLNHHLTGLLGLGSLSWAGHQIHVSLPINQFLNAAVDPKEIPLPHEFILNRDLLAQLYPSFAEGATPFFTLNWSKYAEFLTFRGGLDPVTGGLWLTDIIHHHLAIAILFLIAGHMYRTNWGIGHSIKDILEAHKGPFTGQGHKGLYEILTTSWHAQLSINLAMLGSLTIVVAHHMYSMPPYPYLATDYGTQLSLFTHHMWIGGFLIVGAAAHAAIFMVRDYDPTIRYNDLLDRVLRHRDAIISHLNWVCIFLGFHSFGLYIHNDTMSALGRPQDMFSDTAIQLQPVFAQWIQNTHALAPGTTAPGATTSTSLTWGGDNLVAVGGKVALLPIPLGTADFLVHHIHAFTIHVTVLILLKGVLFARSSRLIPDKANLGFRFPCDGPGRGGTCQVSAWDHVFLGLFWMYNSISVVIFHFSWKMQSDVWGSISDQGIVNHITGGNFAQSSITINGWLRDFLWAQASQVIQSYGSSLSAYGLFFLGAHFVWAFSLMFLFSGRGYWQELIESIVWAHNKLKVAPATQPRALSIVQGRAVGVTHYLLGGIATTWAFFLARIIAVG.

The next 8 helical transmembrane spans lie at 70-93, 156-179, 195-219, 291-309, 346-369, 385-411, 433-455, and 531-549; these read VFSA…FHGA, LYCT…FHYH, LNHH…HVSL, IIHH…GHMY, WHAQ…HHMY, LSLF…IFMV, AIIS…LYIH, and FLVH…LILL. Cysteine 573 and cysteine 582 together coordinate [4Fe-4S] cluster. 2 helical membrane passes run 589 to 610 and 664 to 686; these read HVFL…HFSW and LSAY…MFLF. Position 675 (histidine 675) interacts with chlorophyll a'. Residues methionine 683 and tyrosine 691 each contribute to the chlorophyll a site. Tryptophan 692 provides a ligand contact to phylloquinone. Residues 724–744 traverse the membrane as a helical segment; the sequence is AVGVTHYLLGGIATTWAFFLA.

Belongs to the PsaA/PsaB family. The PsaA/B heterodimer binds the P700 chlorophyll special pair and subsequent electron acceptors. PSI consists of a core antenna complex that captures photons, and an electron transfer chain that converts photonic excitation into a charge separation. The eukaryotic PSI reaction center is composed of at least 11 subunits. P700 is a chlorophyll a/chlorophyll a' dimer, A0 is one or more chlorophyll a, A1 is one or both phylloquinones and FX is a shared 4Fe-4S iron-sulfur center. is required as a cofactor.

Its subcellular location is the plastid. It is found in the chloroplast thylakoid membrane. The enzyme catalyses reduced [plastocyanin] + hnu + oxidized [2Fe-2S]-[ferredoxin] = oxidized [plastocyanin] + reduced [2Fe-2S]-[ferredoxin]. In terms of biological role, psaA and PsaB bind P700, the primary electron donor of photosystem I (PSI), as well as the electron acceptors A0, A1 and FX. PSI is a plastocyanin-ferredoxin oxidoreductase, converting photonic excitation into a charge separation, which transfers an electron from the donor P700 chlorophyll pair to the spectroscopically characterized acceptors A0, A1, FX, FA and FB in turn. Oxidized P700 is reduced on the lumenal side of the thylakoid membrane by plastocyanin. The sequence is that of Photosystem I P700 chlorophyll a apoprotein A1 from Glycine max (Soybean).